The primary structure comprises 252 residues: Phosphatidylserine decarboxylase proenzyme (252 aa).

S211 serves as the catalytic Schiff-base intermediate with substrate; via pyruvic acid. The residue at position 211 (S211) is a Pyruvic acid (Ser); by autocatalysis.

Belongs to the phosphatidylserine decarboxylase family. PSD-A subfamily. As to quaternary structure, heterodimer of a large membrane-associated beta subunit and a small pyruvoyl-containing alpha subunit. It depends on pyruvate as a cofactor. In terms of processing, is synthesized initially as an inactive proenzyme. Formation of the active enzyme involves a self-maturation process in which the active site pyruvoyl group is generated from an internal serine residue via an autocatalytic post-translational modification. Two non-identical subunits are generated from the proenzyme in this reaction, and the pyruvate is formed at the N-terminus of the alpha chain, which is derived from the carboxyl end of the proenzyme. The post-translation cleavage follows an unusual pathway, termed non-hydrolytic serinolysis, in which the side chain hydroxyl group of the serine supplies its oxygen atom to form the C-terminus of the beta chain, while the remainder of the serine residue undergoes an oxidative deamination to produce ammonia and the pyruvoyl prosthetic group on the alpha chain.

It localises to the cell membrane. The catalysed reaction is a 1,2-diacyl-sn-glycero-3-phospho-L-serine + H(+) = a 1,2-diacyl-sn-glycero-3-phosphoethanolamine + CO2. Its pathway is phospholipid metabolism; phosphatidylethanolamine biosynthesis; phosphatidylethanolamine from CDP-diacylglycerol: step 2/2. Its function is as follows. Catalyzes the formation of phosphatidylethanolamine (PtdEtn) from phosphatidylserine (PtdSer). The polypeptide is Phosphatidylserine decarboxylase proenzyme (Novosphingobium aromaticivorans (strain ATCC 700278 / DSM 12444 / CCUG 56034 / CIP 105152 / NBRC 16084 / F199)).